The chain runs to 194 residues: tRNA (pseudouridine(54)-N(1))-methyltransferase (194 aa).

Leu125 is a binding site for S-adenosyl-L-methionine.

It belongs to the methyltransferase superfamily. TrmY family. Homodimer.

The protein localises to the cytoplasm. It catalyses the reaction pseudouridine(54) in tRNA + S-adenosyl-L-methionine = N(1)-methylpseudouridine(54) in tRNA + S-adenosyl-L-homocysteine + H(+). In terms of biological role, specifically catalyzes the N1-methylation of pseudouridine at position 54 (Psi54) in tRNAs. The polypeptide is tRNA (pseudouridine(54)-N(1))-methyltransferase (Methanospirillum hungatei JF-1 (strain ATCC 27890 / DSM 864 / NBRC 100397 / JF-1)).